A 354-amino-acid chain; its full sequence is Probable mannitol dehydrogenase 1 (354 aa).

Zn(2+)-binding residues include Cys-43, His-65, Cys-96, Cys-99, Cys-102, Cys-110, and Cys-158.

It belongs to the zinc-containing alcohol dehydrogenase family. It depends on Zn(2+) as a cofactor.

It carries out the reaction D-mannitol + NAD(+) = D-mannose + NADH + H(+). Functionally, oxidizes mannitol to mannose. Provides the initial step by which translocated mannitol is committed to central metabolism and, by regulating mannitol pool size, is important in regulating salt tolerance at the cellular level. The chain is Probable mannitol dehydrogenase 1 (CAD1) from Stylosanthes humilis (Townsville stylo).